Consider the following 964-residue polypeptide: Integrator complex subunit 4 (964 aa).

Lys27 is subject to N6-acetyllysine. 8 HEAT repeats span residues 67 to 106, 146 to 184, 191 to 229, 230 to 264, 278 to 314, 370 to 406, 407 to 445, and 447 to 485; these read AESV…TAGF, QATQ…LEKS, GSAA…RGLK, LHQT…SQLY, IRLV…EQVS, NLIE…AQSS, PSFA…NITL, and EDQL…GIHL. A Glycyl lysine isopeptide (Lys-Gly) (interchain with G-Cter in SUMO1); alternate cross-link involves residue Lys792. Lys792 participates in a covalent cross-link: Glycyl lysine isopeptide (Lys-Gly) (interchain with G-Cter in SUMO2); alternate.

It belongs to the Integrator subunit 4 family. As to quaternary structure, component of the Integrator complex, composed of core subunits INTS1, INTS2, INTS3, INTS4, INTS5, INTS6, INTS7, INTS8, INTS9/RC74, INTS10, INTS11/CPSF3L, INTS12, INTS13, INTS14 and INTS15. The core complex associates with protein phosphatase 2A subunits PPP2CA and PPP2R1A, to form the Integrator-PP2A (INTAC) complex. INTS4 is part of the RNA endonuclease subcomplex, composed of INTS4, INTS9, INTS11 and inositol hexakisphosphate (InsP6). Interacts with BRAT1; interaction is required for the assembly of the RNA endonuclease subcomplex.

The protein resides in the nucleus. It is found in the cytoplasm. In terms of biological role, component of the integrator complex, a multiprotein complex that terminates RNA polymerase II (Pol II) transcription in the promoter-proximal region of genes. The integrator complex provides a quality checkpoint during transcription elongation by driving premature transcription termination of transcripts that are unfavorably configured for transcriptional elongation: the complex terminates transcription by (1) catalyzing dephosphorylation of the C-terminal domain (CTD) of Pol II subunit POLR2A/RPB1 and SUPT5H/SPT5, (2) degrading the exiting nascent RNA transcript via endonuclease activity and (3) promoting the release of Pol II from bound DNA. The integrator complex is also involved in terminating the synthesis of non-coding Pol II transcripts, such as enhancer RNAs (eRNAs), small nuclear RNAs (snRNAs), telomerase RNAs and long non-coding RNAs (lncRNAs). Within the integrator complex, INTS4 acts as an scaffold that links INTS9 and INTS11. Mediates recruitment of cytoplasmic dynein to the nuclear envelope, probably as component of the integrator complex. This Mus musculus (Mouse) protein is Integrator complex subunit 4 (Ints4).